Reading from the N-terminus, the 468-residue chain is Glutamate--tRNA ligase 2 (468 aa).

The 'HIGH' region signature appears at 13–23; the sequence is PSPTGYLHIGG. Positions 241–245 match the 'KMSKS' region motif; the sequence is KLSKR. Lys244 is a binding site for ATP.

It belongs to the class-I aminoacyl-tRNA synthetase family. Glutamate--tRNA ligase type 1 subfamily. Monomer.

Its subcellular location is the cytoplasm. It catalyses the reaction tRNA(Glu) + L-glutamate + ATP = L-glutamyl-tRNA(Glu) + AMP + diphosphate. Functionally, catalyzes the attachment of glutamate to tRNA(Glu) in a two-step reaction: glutamate is first activated by ATP to form Glu-AMP and then transferred to the acceptor end of tRNA(Glu). This chain is Glutamate--tRNA ligase 2, found in Paracoccus denitrificans (strain Pd 1222).